A 121-amino-acid polypeptide reads, in one-letter code: Small ribosomal subunit protein uS13 (121 aa).

Residues 91–121 (HRRGLPVRGQKTKNNARTRKGPVKTVANKKK) are disordered.

The protein belongs to the universal ribosomal protein uS13 family. As to quaternary structure, part of the 30S ribosomal subunit. Forms a loose heterodimer with protein S19. Forms two bridges to the 50S subunit in the 70S ribosome.

Located at the top of the head of the 30S subunit, it contacts several helices of the 16S rRNA. In the 70S ribosome it contacts the 23S rRNA (bridge B1a) and protein L5 of the 50S subunit (bridge B1b), connecting the 2 subunits; these bridges are implicated in subunit movement. Contacts the tRNAs in the A and P-sites. The chain is Small ribosomal subunit protein uS13 from Staphylococcus saprophyticus subsp. saprophyticus (strain ATCC 15305 / DSM 20229 / NCIMB 8711 / NCTC 7292 / S-41).